Consider the following 473-residue polypeptide: Bifunctional protein HldE (473 aa).

The tract at residues 1 to 318 is ribokinase; it reads MKLSMPRFDQ…RAIQREEGSE (318 aa). 194–197 serves as a coordination point for ATP; it reads NLSE. Residue aspartate 263 is part of the active site. The segment at 343–473 is cytidylyltransferase; that stretch reads FTNGCFDILH…TAIVEKIRKH (131 aa).

It in the N-terminal section; belongs to the carbohydrate kinase PfkB family. The protein in the C-terminal section; belongs to the cytidylyltransferase family. Homodimer.

The catalysed reaction is D-glycero-beta-D-manno-heptose 7-phosphate + ATP = D-glycero-beta-D-manno-heptose 1,7-bisphosphate + ADP + H(+). It catalyses the reaction D-glycero-beta-D-manno-heptose 1-phosphate + ATP + H(+) = ADP-D-glycero-beta-D-manno-heptose + diphosphate. Its pathway is nucleotide-sugar biosynthesis; ADP-L-glycero-beta-D-manno-heptose biosynthesis; ADP-L-glycero-beta-D-manno-heptose from D-glycero-beta-D-manno-heptose 7-phosphate: step 1/4. It participates in nucleotide-sugar biosynthesis; ADP-L-glycero-beta-D-manno-heptose biosynthesis; ADP-L-glycero-beta-D-manno-heptose from D-glycero-beta-D-manno-heptose 7-phosphate: step 3/4. Its function is as follows. Catalyzes the phosphorylation of D-glycero-D-manno-heptose 7-phosphate at the C-1 position to selectively form D-glycero-beta-D-manno-heptose-1,7-bisphosphate. In terms of biological role, catalyzes the ADP transfer from ATP to D-glycero-beta-D-manno-heptose 1-phosphate, yielding ADP-D-glycero-beta-D-manno-heptose. This chain is Bifunctional protein HldE, found in Pseudomonas entomophila (strain L48).